Reading from the N-terminus, the 142-residue chain is Large ribosomal subunit protein uL13 (142 aa).

Belongs to the universal ribosomal protein uL13 family. In terms of assembly, part of the 50S ribosomal subunit.

This protein is one of the early assembly proteins of the 50S ribosomal subunit, although it is not seen to bind rRNA by itself. It is important during the early stages of 50S assembly. The polypeptide is Large ribosomal subunit protein uL13 (Baumannia cicadellinicola subsp. Homalodisca coagulata).